We begin with the raw amino-acid sequence, 353 residues long: N-acetyl-gamma-glutamyl-phosphate reductase (353 aa).

Cysteine 157 is an active-site residue.

Belongs to the NAGSA dehydrogenase family. Type 1 subfamily.

It localises to the cytoplasm. The enzyme catalyses N-acetyl-L-glutamate 5-semialdehyde + phosphate + NADP(+) = N-acetyl-L-glutamyl 5-phosphate + NADPH + H(+). It participates in amino-acid biosynthesis; L-arginine biosynthesis; N(2)-acetyl-L-ornithine from L-glutamate: step 3/4. Its function is as follows. Catalyzes the NADPH-dependent reduction of N-acetyl-5-glutamyl phosphate to yield N-acetyl-L-glutamate 5-semialdehyde. This chain is N-acetyl-gamma-glutamyl-phosphate reductase, found in Bordetella avium (strain 197N).